The following is a 361-amino-acid chain: MLLELARWLQQLESLFGLFNYLTFRGILAALTALFLSLWMGPAVIRKLAQFKGGQPIRQDGPQTHFSKAGTPTMGGSLILLTVTLSVLLWGDLRNRYVWLVLAVMICFGAIGWYDDWIKIVKRDPNGLKSRWKYLLQSIFGLAAGLFLYYTADVPAAITFYIPMFKSIALPLAGVSFVVIAYFWIVGFSNAVNLTDGLDGLAIMPTVLVACALGVFAYASGNVVFAEYLKIPLIPGAGELIIICSAIAGAGLGFLWFNTYPAMVFMGDIGALSLGAVLGTIAVIVRQEMVLVIMGGVFVIETLSVMIQVVSFKLTGKRVFRMAPIHHHFELKGWPEPRVIVRFWIISVVLVLIGLATLKVR.

10 consecutive transmembrane segments (helical) span residues 25-45, 73-93, 98-118, 139-159, 168-188, 200-220, 237-257, 264-284, 290-310, and 339-359; these read RGILAALTALFLSLWMGPAVI, TMGGSLILLTVTLSVLLWGDL, VWLVLAVMICFGAIGWYDDWI, IFGLAAGLFLYYTADVPAAIT, IALPLAGVSFVVIAYFWIVGF, GLAIMPTVLVACALGVFAYAS, AGELIIICSAIAGAGLGFLWF, VFMGDIGALSLGAVLGTIAVI, VLVIMGGVFVIETLSVMIQVV, and VIVRFWIISVVLVLIGLATLK.

It belongs to the glycosyltransferase 4 family. MraY subfamily. It depends on Mg(2+) as a cofactor.

Its subcellular location is the cell inner membrane. It catalyses the reaction UDP-N-acetyl-alpha-D-muramoyl-L-alanyl-gamma-D-glutamyl-meso-2,6-diaminopimeloyl-D-alanyl-D-alanine + di-trans,octa-cis-undecaprenyl phosphate = di-trans,octa-cis-undecaprenyl diphospho-N-acetyl-alpha-D-muramoyl-L-alanyl-D-glutamyl-meso-2,6-diaminopimeloyl-D-alanyl-D-alanine + UMP. Its pathway is cell wall biogenesis; peptidoglycan biosynthesis. In terms of biological role, catalyzes the initial step of the lipid cycle reactions in the biosynthesis of the cell wall peptidoglycan: transfers peptidoglycan precursor phospho-MurNAc-pentapeptide from UDP-MurNAc-pentapeptide onto the lipid carrier undecaprenyl phosphate, yielding undecaprenyl-pyrophosphoryl-MurNAc-pentapeptide, known as lipid I. This chain is Phospho-N-acetylmuramoyl-pentapeptide-transferase, found in Xanthomonas euvesicatoria pv. vesicatoria (strain 85-10) (Xanthomonas campestris pv. vesicatoria).